Reading from the N-terminus, the 190-residue chain is Class III hydrophobin F (190 aa).

The N-terminal stretch at 1–18 is a signal peptide; it reads MRPITILCTLATLSTTLA. 4 disulfides stabilise this stretch: C54–C115, C62–C109, C63–C97, and C116–C131.

This sequence belongs to the fungal hydrophobin family. Self-assembles to form functional amyloid fibrils called rodlets. Self-assembly into fibrillar rodlets occurs spontaneously at hydrophobic:hydrophilic interfaces and the rodlets further associate laterally to form amphipathic monolayers.

Its subcellular location is the secreted. It localises to the cell wall. In terms of biological role, aerial growth, conidiation, and dispersal of filamentous fungi in the environment rely upon a capability of their secreting small amphipathic proteins called hydrophobins (HPBs) with low sequence identity. Class I can self-assemble into an outermost layer of rodlet bundles on aerial cell surfaces, conferring cellular hydrophobicity that supports fungal growth, development and dispersal; whereas Class II form highly ordered films at water-air interfaces through intermolecular interactions but contribute nothing to the rodlet structure. RodF and rodG belong to Class III, which contains hydrophobins with intermediate (between classes I and II) or atypical characteristics. RodF, unlike rodA, is not required for rodlet formation. This Aspergillus fumigatus (strain ATCC MYA-4609 / CBS 101355 / FGSC A1100 / Af293) (Neosartorya fumigata) protein is Class III hydrophobin F.